A 494-amino-acid polypeptide reads, in one-letter code: UPF0371 protein Sez_1293 (494 aa).

This sequence belongs to the UPF0371 family.

This is UPF0371 protein Sez_1293 from Streptococcus equi subsp. zooepidemicus (strain MGCS10565).